A 394-amino-acid chain; its full sequence is Elongation factor Tu (394 aa).

A tr-type G domain is found at Lys10–Glu204. Residues Gly19–Thr26 are G1. A GTP-binding site is contributed by Gly19–Thr26. Thr26 is a Mg(2+) binding site. The segment at Gly60–Asn64 is G2. Residues Asp81–Gly84 form a G3 region. GTP is bound by residues Asp81–His85 and Asn136–Asp139. Residues Asn136 to Asp139 are G4. The tract at residues Ser174–Leu176 is G5.

It belongs to the TRAFAC class translation factor GTPase superfamily. Classic translation factor GTPase family. EF-Tu/EF-1A subfamily. Monomer.

It localises to the cytoplasm. The enzyme catalyses GTP + H2O = GDP + phosphate + H(+). Functionally, GTP hydrolase that promotes the GTP-dependent binding of aminoacyl-tRNA to the A-site of ribosomes during protein biosynthesis. This is Elongation factor Tu from Klebsiella pneumoniae subsp. pneumoniae (strain ATCC 700721 / MGH 78578).